The chain runs to 386 residues: Diels-Alderase phm7 (386 aa).

The segment at 1 to 223 (MSEPTSSSSL…MVRGWSARPW (223 aa)) is beta-sandwich motif. The substrate site is built by Glu-51, Asn-84, and Lys-356. Residues 223–386 (WPTFMNDAYY…FGGQLQIPVP (164 aa)) are beta-barrel motif.

Belongs to the Diels-Alderase family.

Its pathway is secondary metabolite biosynthesis. 3-aminomethyl-p-menthane which is similar to the phomasetin substructure, dose-dependently inhibits phm7 activity in vitro and production of phomasetin in the fungus. Functionally, diels-Alderase; part of the gene cluster that mediates the biosynthesis of the trans-fused decalin-containing tetramic acid phomasetin, the stereochemical opposite of the HIV-1 integrase inhibitor equisetin. The PKS module of phm1 together with the enoylreductase phm4 catalyze the formation of the polyketide unit which is then conjugated to L-serine by the condensation domain of the phm1 NRPS module. Activity of the Dieckmann cyclase domain (RED) of phm1 results in release of the Dieckmann product intermediate. The Diels-Alderase phm7 then uses the Dieckmann product of phm1 as substrate and catalyzes the Diels-Alder cycloaddition to form the decalin ring of N-desmethylphomasetin. N-desmethylphomasetin is further methylated to phomasetin by the methyltransferase phm5. This chain is Diels-Alderase phm7, found in Pyrenochaetopsis sp.